Here is a 319-residue protein sequence, read N- to C-terminus: Putrescine hydroxycinnamoyltransferase 2 (319 aa).

Residues His-160 and Asp-301 each act as proton acceptor in the active site.

It belongs to the plant acyltransferase family.

Functionally, hydroxycinnamoyl transferase that catalyzes the transfer of an acyl from p-coumaryol-CoA to putrescine, to produce coumaroyl putrescine. The protein is Putrescine hydroxycinnamoyltransferase 2 of Oryza sativa subsp. japonica (Rice).